Reading from the N-terminus, the 692-residue chain is Follicle-stimulating hormone receptor (692 aa).

Positions 1–17 (MALLLVSLLAFLGTGSG) are cleaved as a signal peptide. 2 disulfide bridges follow: C18/C25 and C23/C32. Residues 18-46 (CHHWLCHCSNRVFLCQDSKVTEIPTDLPR) enclose the LRRNT domain. Over 18–365 (CHHWLCHCSN…EDIMGYNILR (348 aa)) the chain is Extracellular. LRR repeat units lie at residues 49–72 (IELRFVLTKLRVIPKGSFAGFGDL), 73–97 (EKIEISQNDVLEVIEADVFSNLPKL), 98–118 (HEIRIEKANNLLYINPEAFQN), 119–143 (LPSLRYLLISNTGIKHLPAVHKIQS), 144–169 (LQKVLLDIQDNINIHIVARNSFMGLS), 170–192 (FESVILWLSKNGIEEIHNCAFNG), 193–216 (TQLDELNLSDNNNLEELPNDVFQG), 217–240 (ASGPVILDISRTKVHSLPNHGLEN), and 241–259 (LKKLRARSTYRLKKLPNLD). Residues N191 and N199 are each glycosylated (N-linked (GlcNAc...) asparagine). Cystine bridges form between C275–C345, C276–C292, C276–C355, and C292–C337. The N-linked (GlcNAc...) asparagine glycan is linked to N293. Y334 carries the post-translational modification Sulfotyrosine. The helical transmembrane segment at 366-386 (VLIWFISILAITGNTTVLVVL) threads the bilayer. Residues 387–397 (TTSQYKLTVPR) are Cytoplasmic-facing. Residues 398–420 (FLMCNLAFADLCIGIYLLLIASV) traverse the membrane as a helical segment. Residues 421–442 (DIHTKSQYHNYAIDWQTGAGCD) are Extracellular-facing. The cysteines at positions 441 and 516 are disulfide-linked. A helical membrane pass occupies residues 443 to 464 (AAGFFTVFASELSVYTLTAITL). At 465 to 484 (ERWHTITHAMQLECKVQLRH) the chain is on the cytoplasmic side. Residues 485 to 507 (AASVMVLGWTFAFAAALFPIFGI) form a helical membrane-spanning segment. The Extracellular portion of the chain corresponds to 508-527 (SSYMKVSICLPMDIDSPLSQ). The helical transmembrane segment at 528–549 (LYVMALLVLNVLAFVVICGCYT) threads the bilayer. Residues 550 to 572 (HIYLTVRNPTIVSSSSDTKIAKR) lie on the Cytoplasmic side of the membrane. A helical transmembrane segment spans residues 573–596 (MATLIFTDFLCMAPISFFAISASL). Over 597 to 607 (KVPLITVSKAK) the chain is Extracellular. Residues 608–629 (ILLVLFYPINSCANPFLYAIFT) form a helical membrane-spanning segment. Residues 630-692 (KNFRRDFFIL…LVPLNHSSQN (63 aa)) lie on the Cytoplasmic side of the membrane.

Belongs to the G-protein coupled receptor 1 family. FSH/LSH/TSH subfamily. As to quaternary structure, homotrimer. Functions as a homotrimer binding the FSH hormone heterodimer composed of CGA and FSHB. Interacts with ARRB2. Interacts with APPL2; interaction is independent of follicle stimulating hormone stimulation. In terms of processing, N-glycosylated; indirectly required for FSH-binding, possibly via a conformational change that allows high affinity binding of hormone. Sulfated. As to expression, sertoli cells and ovarian granulosa cells.

Its subcellular location is the cell membrane. Its function is as follows. G protein-coupled receptor for follitropin, the follicle-stimulating hormone. Through cAMP production activates the downstream PI3K-AKT and ERK1/ERK2 signaling pathways. This Rattus norvegicus (Rat) protein is Follicle-stimulating hormone receptor (Fshr).